The primary structure comprises 482 residues: tRNA sulfurtransferase (482 aa).

One can recognise a THUMP domain in the interval aspartate 61–arginine 165. ATP is bound by residues leucine 183 to isoleucine 184, lysine 265, glycine 287, and glutamine 296. Cysteine 344 and cysteine 456 are disulfide-bonded. In terms of domain architecture, Rhodanese spans isoleucine 404 to proline 482. Residue cysteine 456 is the Cysteine persulfide intermediate of the active site.

It belongs to the ThiI family.

It localises to the cytoplasm. It carries out the reaction [ThiI sulfur-carrier protein]-S-sulfanyl-L-cysteine + a uridine in tRNA + 2 reduced [2Fe-2S]-[ferredoxin] + ATP + H(+) = [ThiI sulfur-carrier protein]-L-cysteine + a 4-thiouridine in tRNA + 2 oxidized [2Fe-2S]-[ferredoxin] + AMP + diphosphate. It catalyses the reaction [ThiS sulfur-carrier protein]-C-terminal Gly-Gly-AMP + S-sulfanyl-L-cysteinyl-[cysteine desulfurase] + AH2 = [ThiS sulfur-carrier protein]-C-terminal-Gly-aminoethanethioate + L-cysteinyl-[cysteine desulfurase] + A + AMP + 2 H(+). Its pathway is cofactor biosynthesis; thiamine diphosphate biosynthesis. Catalyzes the ATP-dependent transfer of a sulfur to tRNA to produce 4-thiouridine in position 8 of tRNAs, which functions as a near-UV photosensor. Also catalyzes the transfer of sulfur to the sulfur carrier protein ThiS, forming ThiS-thiocarboxylate. This is a step in the synthesis of thiazole, in the thiamine biosynthesis pathway. The sulfur is donated as persulfide by IscS. The protein is tRNA sulfurtransferase of Photobacterium profundum (strain SS9).